A 308-amino-acid polypeptide reads, in one-letter code: Tetraacyldisaccharide 4'-kinase (308 aa).

Residue 63–70 (SFGGNGKT) participates in ATP binding.

The protein belongs to the LpxK family.

The catalysed reaction is a lipid A disaccharide + ATP = a lipid IVA + ADP + H(+). Its pathway is glycolipid biosynthesis; lipid IV(A) biosynthesis; lipid IV(A) from (3R)-3-hydroxytetradecanoyl-[acyl-carrier-protein] and UDP-N-acetyl-alpha-D-glucosamine: step 6/6. Transfers the gamma-phosphate of ATP to the 4'-position of a tetraacyldisaccharide 1-phosphate intermediate (termed DS-1-P) to form tetraacyldisaccharide 1,4'-bis-phosphate (lipid IVA). The polypeptide is Tetraacyldisaccharide 4'-kinase (Campylobacter jejuni subsp. jejuni serotype O:23/36 (strain 81-176)).